A 150-amino-acid polypeptide reads, in one-letter code: Cdc42 effector protein 5 (150 aa).

Disordered stretches follow at residues 1–20 (MPVM…DRGA), 34–89 (LHVG…PADP), and 114–133 (SETT…QHPK). The CRIB domain occupies 23–37 (ISAPLGDFRHTLHVG). Arg38 is modified (omega-N-methylarginine). 2 stretches are compositionally biased toward pro residues: residues 55–66 (GPPPEPGAPPVV) and 74–87 (PAAP…PSPA). A compositionally biased stretch (basic and acidic residues) spans 114–127 (SETTATKPDGDAHP).

The protein belongs to the BORG/CEP family. Interacts with CDC42 in a GTP-dependent manner, and with SEPT7. Highly expressed in the skeletal muscle.

Its subcellular location is the endomembrane system. The protein localises to the cytoplasm. The protein resides in the cytoskeleton. Its function is as follows. Probably involved in the organization of the actin cytoskeleton. May act downstream of CDC42 to induce actin filament assembly leading to cell shape changes. Induces pseudopodia formation in fibroblasts. Inhibits MAPK8 independently of CDC42 binding. Controls septin organization and this effect is negatively regulated by CDC42. The protein is Cdc42 effector protein 5 (Cdc42ep5) of Mus musculus (Mouse).